We begin with the raw amino-acid sequence, 114 residues long: Nucleoid-associated protein Cyan7425_0899 (114 aa).

Belongs to the YbaB/EbfC family. Homodimer.

Its subcellular location is the cytoplasm. The protein localises to the nucleoid. Its function is as follows. Binds to DNA and alters its conformation. May be involved in regulation of gene expression, nucleoid organization and DNA protection. The protein is Nucleoid-associated protein Cyan7425_0899 of Cyanothece sp. (strain PCC 7425 / ATCC 29141).